We begin with the raw amino-acid sequence, 160 residues long: S-ribosylhomocysteine lyase (160 aa).

Fe cation-binding residues include H57, H61, and C127.

It belongs to the LuxS family. Homodimer. Requires Fe cation as cofactor.

The catalysed reaction is S-(5-deoxy-D-ribos-5-yl)-L-homocysteine = (S)-4,5-dihydroxypentane-2,3-dione + L-homocysteine. Its function is as follows. Involved in the synthesis of autoinducer 2 (AI-2) which is secreted by bacteria and is used to communicate both the cell density and the metabolic potential of the environment. The regulation of gene expression in response to changes in cell density is called quorum sensing. Catalyzes the transformation of S-ribosylhomocysteine (RHC) to homocysteine (HC) and 4,5-dihydroxy-2,3-pentadione (DPD). The sequence is that of S-ribosylhomocysteine lyase from Streptococcus pneumoniae (strain CGSP14).